A 622-amino-acid polypeptide reads, in one-letter code: Dynein axonemal assembly factor 1 (622 aa).

The tract at residues 1 to 80 (MHPEVSEPQA…ARNDRDDRGP (80 aa)) is disordered. Basic and acidic residues predominate over residues 22–42 (AGDHGRAGPGVRKEEINETKE). The span at 48-59 (STTSCQSQKQQS) shows a compositional bias: low complexity. The segment covering 62 to 80 (SRLDCRSGYARNDRDDRGP) has biased composition (basic and acidic residues). 6 LRR repeats span residues 101–123 (ALND…EEYT), 124–145 (GLRC…QAQS), 146–167 (ELRC…EPLQ), 168–189 (KLDA…SCLP), 190–211 (VLNT…QHLR), and 215–236 (RLCV…SVLE). One can recognise an LRRCT domain in the interval 249–288 (NPVTKHIPNYRRTVTVRLKQLTYLDDRPVFPKDRACAEAW). Residues 326–336 (EERKKARDKGE) are compositionally biased toward basic and acidic residues. The interval 326–360 (EERKKARDKGETPLPDSEESSSTSPEAQDKPPLGE) is disordered. The span at 337–351 (TPLPDSEESSSTSPE) shows a compositional bias: low complexity. 3 positions are modified to phosphoserine: Ser349, Ser464, and Ser487. Disordered stretches follow at residues 481 to 503 (SSLS…EHTP) and 540 to 622 (LETQ…FGLD). Residues 540–550 (LETQGQVFSTT) show a composition bias toward polar residues.

This sequence belongs to the DNAAF1 family.

Its subcellular location is the cell projection. The protein resides in the cilium. Cilium-specific protein required for the stability of the ciliary architecture. Plays a role in cytoplasmic preassembly of dynein arms. Involved in regulation of microtubule-based cilia and actin-based brush border microvilli. In Peromyscus leucopus (White-footed mouse), this protein is Dynein axonemal assembly factor 1 (Dnaaf1).